The chain runs to 363 residues: Peptide chain release factor 1 (363 aa).

Position 237 is an N5-methylglutamine (Q237).

This sequence belongs to the prokaryotic/mitochondrial release factor family. In terms of processing, methylated by PrmC. Methylation increases the termination efficiency of RF1.

It localises to the cytoplasm. Functionally, peptide chain release factor 1 directs the termination of translation in response to the peptide chain termination codons UAG and UAA. This Mycoplasma capricolum subsp. capricolum (strain California kid / ATCC 27343 / NCTC 10154) protein is Peptide chain release factor 1 (prfA).